The chain runs to 396 residues: Elongation factor Tu (396 aa).

The tr-type G domain occupies 11-205 (KPHVNIGTIG…VVDEYIPTPE (195 aa)). The tract at residues 20-27 (GHVDHGKT) is G1. 20 to 27 (GHVDHGKT) provides a ligand contact to GTP. Position 27 (T27) interacts with Mg(2+). The G2 stretch occupies residues 61 to 65 (GITIN). The G3 stretch occupies residues 82–85 (DAPG). GTP-binding positions include 82–86 (DAPGH) and 137–140 (NKCD). A G4 region spans residues 137–140 (NKCD). The interval 175–177 (SAL) is G5.

The protein belongs to the TRAFAC class translation factor GTPase superfamily. Classic translation factor GTPase family. EF-Tu/EF-1A subfamily. Monomer.

The protein resides in the cytoplasm. The enzyme catalyses GTP + H2O = GDP + phosphate + H(+). GTP hydrolase that promotes the GTP-dependent binding of aminoacyl-tRNA to the A-site of ribosomes during protein biosynthesis. This is Elongation factor Tu from Lactobacillus delbrueckii subsp. bulgaricus (strain ATCC 11842 / DSM 20081 / BCRC 10696 / JCM 1002 / NBRC 13953 / NCIMB 11778 / NCTC 12712 / WDCM 00102 / Lb 14).